Consider the following 204-residue polypeptide: LexA repressor (204 aa).

Residues 27–47 constitute a DNA-binding region (H-T-H motif); the sequence is VREIGEAVGLASSSTVHGHLA. Residues Ser126 and Lys164 each act as for autocatalytic cleavage activity in the active site.

It belongs to the peptidase S24 family. Homodimer.

The catalysed reaction is Hydrolysis of Ala-|-Gly bond in repressor LexA.. Functionally, represses a number of genes involved in the response to DNA damage (SOS response), including recA and lexA. In the presence of single-stranded DNA, RecA interacts with LexA causing an autocatalytic cleavage which disrupts the DNA-binding part of LexA, leading to derepression of the SOS regulon and eventually DNA repair. This Listeria monocytogenes serotype 4b (strain CLIP80459) protein is LexA repressor.